The chain runs to 284 residues: D-tagatose-1,6-bisphosphate aldolase subunit GatY (284 aa).

Aspartate 82 (proton donor) is an active-site residue. Residues histidine 83 and histidine 180 each coordinate Zn(2+). Glycine 181 is a dihydroxyacetone phosphate binding site. Residue histidine 208 participates in Zn(2+) binding. Dihydroxyacetone phosphate-binding positions include 209–211 and 230–233; these read GAS and NVAT.

Belongs to the class II fructose-bisphosphate aldolase family. TagBP aldolase GatY subfamily. Forms a complex with GatZ. Zn(2+) is required as a cofactor.

It catalyses the reaction D-tagatofuranose 1,6-bisphosphate = D-glyceraldehyde 3-phosphate + dihydroxyacetone phosphate. The protein operates within carbohydrate metabolism; D-tagatose 6-phosphate degradation; D-glyceraldehyde 3-phosphate and glycerone phosphate from D-tagatose 6-phosphate: step 2/2. Functionally, catalytic subunit of the tagatose-1,6-bisphosphate aldolase GatYZ, which catalyzes the reversible aldol condensation of dihydroxyacetone phosphate (DHAP or glycerone-phosphate) with glyceraldehyde 3-phosphate (G3P) to produce tagatose 1,6-bisphosphate (TBP). Requires GatZ subunit for full activity and stability. Is involved in the catabolism of galactitol. The sequence is that of D-tagatose-1,6-bisphosphate aldolase subunit GatY from Escherichia coli O7:K1 (strain IAI39 / ExPEC).